We begin with the raw amino-acid sequence, 434 residues long: APETALA2-like protein 2 (434 aa).

The disordered stretch occupies residues M1–S116. Over residues R12–S23 the composition is skewed to low complexity. A compositionally biased stretch (gly residues) spans D25–L38. Positions L72 to Q87 are enriched in pro residues. Basic residues predominate over residues V104–R113. Positions K106–R115 match the Nuclear localization signal motif. 2 consecutive DNA-binding regions (AP2/ERF) follow at residues Q118–N174 and K210–E267. Residues L291 to I295 carry the EAR motif.

It belongs to the AP2/ERF transcription factor family. AP2 subfamily. As to quaternary structure, may form homodimer. Interacts with TPR2/ASP1. In terms of tissue distribution, highly expressed in developing panicles and in young seedlings. Present at low levels at all developmental stages.

The protein localises to the nucleus. In terms of biological role, probable transcription factor. Involved in spikelet transition. Together with SNB, controls synergistically inflorescence architecture and floral meristem establishment via the regulation of spatio-temporal expression of B- and E-function floral organ identity genes in the lodicules and of spikelet meristem genes. Prevents lemma and palea elongation as well as grain growth. This is APETALA2-like protein 2 from Oryza sativa subsp. japonica (Rice).